The sequence spans 568 residues: NADPH oxidase 3 (568 aa).

Over 1–12 (MPTCWILNESVS) the chain is Cytoplasmic. A helical transmembrane segment spans residues 13 to 33 (FVVALLWLAINIYLFIDTFCW). The Extracellular segment spans residues 34–49 (YAEEESFFYTRVILGS). The chain crosses the membrane as a helical span at residues 50-70 (ALAWARASAVCLNFNCMLILL). The region spanning 55–284 (RASAVCLNFN…VVLYACEIII (230 aa)) is the Ferric oxidoreductase domain. Residues 71-103 (PVSRNFVSLVRGTSVCCRGPWRRQLDKNLKFHK) are Cytoplasmic-facing. The helical transmembrane segment at 104–124 (LVAYGIAVNSVIHIVAHLFNL) threads the bilayer. The Extracellular segment spans residues 125 to 167 (ERYHLGQAKDAEGLLAALSKLGNAPNESYLNPVRTLYTGTTTQ). The chain crosses the membrane as a helical span at residues 168–188 (LLMTVSGITGLVISLALILIM). The Cytoplasmic segment spans residues 189 to 201 (TSSTEFIRQSSYE). A helical membrane pass occupies residues 202 to 222 (LFWYTHHIFIFLFISLAIHGG). Residues 223–395 (GRIIRGQTPE…DGPFGGSLAD (173 aa)) lie on the Extracellular side of the membrane. N-linked (GlcNAc...) asparagine glycosylation is present at asparagine 238. The FAD-binding FR-type domain maps to 285–395 (RFWRSHQEVV…DGPFGGSLAD (111 aa)). Residues 396–416 (VFHYPVSVCIATGIGVTPFAS) form a helical membrane-spanning segment. The Cytoplasmic portion of the chain corresponds to 417-568 (LLKSVWYKCC…VHFYYNKENF (152 aa)).

As to quaternary structure, forms a heterodimer with CYBA/p22phox which is essential for its activity and cell membrane localization. Heme is required as a cofactor. In terms of processing, N-glycosylated in a CYBA/p22phox-dependent manner. Expressed in the inner ear by the spiral glanglia and the organ of Corti.

It localises to the cell membrane. It catalyses the reaction NADPH + 2 O2 = 2 superoxide + NADP(+) + H(+). Its activity is regulated as follows. Activated by the ototoxic drug cisplatin. Activated by NOXO1. Cooperatively activated by NCF1 and NCF2 or NOXA1 in a phorbol 12-myristate 13-acetate (PMA)-dependent manner. Inhibited by diphenyleneiodonium chloride. NADPH oxidase that catalyzes the generation of superoxide from molecular oxygen utilizing NADPH as an electron donor, upon formation of a complex with CYBA/p22phox. Plays a role in the biogenesis of otoconia/otolith, which are crystalline structures of the inner ear involved in the perception of gravity. The polypeptide is NADPH oxidase 3 (Nox3) (Rattus norvegicus (Rat)).